Reading from the N-terminus, the 222-residue chain is MESVLNNEKAIVVFSGGQDSTTCLFYAKKHFKEVELVTFNYGQRHDTEIEVAKQIAQDQGMKHHVLDMSLLSQLTPNALTQHDMEITNNEDGIPNTFVPARNLLFLSFAGALAYQIGAKHIITGVCETDFSGYPDCRDSFIKSMNVTLSLAMDKDCVIHTPLMWLNKAETWKLSDELEVLDYIRTKTLTCYNGIIGDGCGECPACHLRQRGLNQYLESKGAL.

F14–L24 contacts ATP. The Zn(2+) site is built by C190, C199, C202, and C205.

This sequence belongs to the QueC family. Homodimer. Requires Zn(2+) as cofactor.

The enzyme catalyses 7-carboxy-7-deazaguanine + NH4(+) + ATP = 7-cyano-7-deazaguanine + ADP + phosphate + H2O + H(+). It functions in the pathway purine metabolism; 7-cyano-7-deazaguanine biosynthesis. Its function is as follows. Catalyzes the ATP-dependent conversion of 7-carboxy-7-deazaguanine (CDG) to 7-cyano-7-deazaguanine (preQ(0)). The polypeptide is 7-cyano-7-deazaguanine synthase (Staphylococcus aureus (strain bovine RF122 / ET3-1)).